The chain runs to 492 residues: Transmembrane protein 104 homolog (492 aa).

The Cytoplasmic segment spans residues 1 to 17 (MQSNTDSSTSGTYSQTV). The helical transmembrane segment at 18–38 (GLLYVFNLIVGTGALALPKAF) threads the bilayer. The Extracellular segment spans residues 39 to 44 (QTAGWL). A helical membrane pass occupies residues 45-65 (LSITLLTFSAFMSYVAATFVI). Residues 66 to 113 (EALSVANAVLSKKRRVEYDDVVVADGPSTFEISKKVEVSEMASMFLSK) are Cytoplasmic-facing. The helical transmembrane segment at 114 to 134 (VSLVFSYFAIIIYLFGDLAIY) threads the bilayer. The Extracellular portion of the chain corresponds to 135 to 176 (STTVPKSAMNIVCATINASTVKSSDPCHESWPEILTRMTVYR). N-linked (GlcNAc...) asparagine glycosylation is present at Asn-151. A helical transmembrane segment spans residues 177-197 (FFVIIFVVVVCLPMVIAGITK). Residues 198–209 (TRHIQIMTTLSR) lie on the Cytoplasmic side of the membrane. The helical transmembrane segment at 210–230 (WAAFILMISLATMQLSSDGAA) threads the bilayer. Over 231–237 (AHPPAYN) the chain is Extracellular. A helical membrane pass occupies residues 238–258 (FHGFGSLFGCAVYAFMCHHSI). Topologically, residues 259–274 (PSLITPMRTKDNVFGK) are cytoplasmic. Residues 275–295 (IALVYGVVGVFYFTLSLTGAF) traverse the membrane as a helical segment. Topologically, residues 296–324 (AFEHVQDIYTLNFFHDGNTSFIYSIIDYF) are extracellular. Asn-313 carries an N-linked (GlcNAc...) asparagine glycan. Residues 325–345 (LALFPIITLTSSYPIIALTLI) form a helical membrane-spanning segment. The Cytoplasmic segment spans residues 346 to 392 (NNFNVVKDILCPKVGQENESLLEADSLVEDNDTDDEREARNARNEKS). A helical transmembrane segment spans residues 393–413 (VFDVLVPALVLALPTFLSLLT). At 414–415 (DD) the chain is on the extracellular side. A helical membrane pass occupies residues 416-436 (MLLLASITGSFPGVAVQFAIP). Residues 437 to 466 (CLLVTAARKHARSVLNFPVPRKNNSPFQSP) are Cytoplasmic-facing. Residues 467–487 (IWIVLISSWAGFSMIMVLLNL) form a helical membrane-spanning segment. The Extracellular portion of the chain corresponds to 488–492 (VGVKF).

This sequence belongs to the TMEM104 family.

The protein localises to the membrane. This Caenorhabditis elegans protein is Transmembrane protein 104 homolog.